Reading from the N-terminus, the 435-residue chain is Cytochrome c oxidase subunit 3 (435 aa).

7 helical membrane-spanning segments follow: residues 70–90 (VAPLAVTLPLGFFVLNYFGVI), 96–116 (LLIALSSFIGGLVIWTISIIF), 132–152 (LVMGMMMFIISEVMFFFSFFW), 176–196 (VYSYMGLPLLNTVLLLLSGAI), 325–345 (LYFTLLCAVVFLACQGYEYFF), 360–380 (FLLTGFHGFHVLVGSILIGII), and 412–432 (LFYWHFVDIVWIFLYIVIYWW).

Belongs to the cytochrome c oxidase subunit 3 family. As to quaternary structure, component of the cytochrome c oxidase (complex IV, CIV), a multisubunit enzyme composed of a catalytic core of 3 subunits and several supernumerary subunits. The complex exists as a monomer or a dimer and forms supercomplexes (SCs) in the inner mitochondrial membrane with ubiquinol-cytochrome c oxidoreductase (cytochrome b-c1 complex, complex III, CIII).

It is found in the mitochondrion inner membrane. The enzyme catalyses 4 Fe(II)-[cytochrome c] + O2 + 8 H(+)(in) = 4 Fe(III)-[cytochrome c] + 2 H2O + 4 H(+)(out). In terms of biological role, component of the cytochrome c oxidase, the last enzyme in the mitochondrial electron transport chain which drives oxidative phosphorylation. The respiratory chain contains 3 multisubunit complexes succinate dehydrogenase (complex II, CII), ubiquinol-cytochrome c oxidoreductase (cytochrome b-c1 complex, complex III, CIII) and cytochrome c oxidase (complex IV, CIV), that cooperate to transfer electrons derived from NADH and succinate to molecular oxygen, creating an electrochemical gradient over the inner membrane that drives transmembrane transport and the ATP synthase. Cytochrome c oxidase is the component of the respiratory chain that catalyzes the reduction of oxygen to water. Electrons originating from reduced cytochrome c in the intermembrane space (IMS) are transferred via the dinuclear copper A center (CU(A)) of subunit 2 and heme A of subunit 1 to the active site in subunit 1, a binuclear center (BNC) formed by heme A3 and copper B (CU(B)). The BNC reduces molecular oxygen to 2 water molecules using 4 electrons from cytochrome c in the IMS and 4 protons from the mitochondrial matrix. This chain is Cytochrome c oxidase subunit 3 (cox3), found in Dictyostelium discoideum (Social amoeba).